The primary structure comprises 256 residues: Small ribosomal subunit protein uS2 (256 aa).

The protein belongs to the universal ribosomal protein uS2 family.

This Methylococcus capsulatus (strain ATCC 33009 / NCIMB 11132 / Bath) protein is Small ribosomal subunit protein uS2.